The primary structure comprises 195 residues: GTP cyclohydrolase-2 (195 aa).

48 to 52 provides a ligand contact to GTP; it reads RIHSE. Positions 53, 64, and 66 each coordinate Zn(2+). GTP contacts are provided by residues glutamine 69, 90–92, and threonine 112; that span reads EGR. Aspartate 124 (proton acceptor) is an active-site residue. Residue arginine 126 is the Nucleophile of the active site. Positions 147 and 152 each coordinate GTP.

Belongs to the GTP cyclohydrolase II family. The cofactor is Zn(2+).

The enzyme catalyses GTP + 4 H2O = 2,5-diamino-6-hydroxy-4-(5-phosphoribosylamino)-pyrimidine + formate + 2 phosphate + 3 H(+). The protein operates within cofactor biosynthesis; riboflavin biosynthesis; 5-amino-6-(D-ribitylamino)uracil from GTP: step 1/4. In terms of biological role, catalyzes the conversion of GTP to 2,5-diamino-6-ribosylamino-4(3H)-pyrimidinone 5'-phosphate (DARP), formate and pyrophosphate. The chain is GTP cyclohydrolase-2 from Campylobacter fetus subsp. fetus (strain 82-40).